The chain runs to 212 residues: MNSQQCVIIGIAGASASGKSLIAKTIFDELRRDLGTDQIGVINEDAYYKDQSHMSMEERVQTNYDHPKALDHQLLCSHLKQLKAGQAADIPCYSYTEHTRISETIHMTPKKVIILEGILLLTDPKLRDLMDASVFMDTPLDICFLRRLTRDVAERDRTMESVISQYKKTVRPMFLQFIEPSKQYADIIVPRGGKNRIATDILKTRIQHLLAK.

13-20 (GASASGKS) is a binding site for ATP.

This sequence belongs to the uridine kinase family.

Its subcellular location is the cytoplasm. The catalysed reaction is uridine + ATP = UMP + ADP + H(+). It catalyses the reaction cytidine + ATP = CMP + ADP + H(+). It functions in the pathway pyrimidine metabolism; CTP biosynthesis via salvage pathway; CTP from cytidine: step 1/3. The protein operates within pyrimidine metabolism; UMP biosynthesis via salvage pathway; UMP from uridine: step 1/1. The polypeptide is Uridine kinase (Shewanella denitrificans (strain OS217 / ATCC BAA-1090 / DSM 15013)).